We begin with the raw amino-acid sequence, 288 residues long: MPVPESQLERWSHQGATTTAKKTHESIRAALDRYKWPKGKPEVYLQGSYKNSTNIRGDSDVDVVVQLNSVFMNNLTAEQKRRFGFVKSDYTWNDFYSDVERALTDYYGASKVRRGRKTLKVETTYLPADVVVCIQYRKYPPNRKSEDDYIEGMTFYVPSEDRWVVNYPKLHYENGAAKNQQTNEWYKPTIRMFKNARTYLIEQGAPQDLAPSYFLECLLYNVPDSKFGGTFKDTFCSVINWLKRADLSKFRCQNGQDDLFGEFPEQWSEEKARRFLRYMDDLWTGWGQ.

A disordered region spans residues 1–23 (MPVPESQLERWSHQGATTTAKKT). Gln-46 lines the UTP pocket. Position 46-48 (46-48 (QGS)) interacts with ATP. 2 residues coordinate Mg(2+): Asp-60 and Asp-62. UTP-binding positions include Asp-62 and 116-120 (RKTLK). Position 129 (Asp-129) interacts with Mg(2+). Asn-166 is a UTP binding site. The ATP site is built by Lys-194, Ser-212, and Glu-265.

The protein belongs to the CD-NTase family. E01 subfamily. Mg(2+) serves as cofactor.

The catalysed reaction is UTP + ATP = 3',3'-cUAMP + 2 diphosphate. Cyclic nucleotide synthase (second messenger synthase) of a CBASS antivirus system. CBASS (cyclic oligonucleotide-based antiphage signaling system) provides immunity against bacteriophage. The CD-NTase protein synthesizes cyclic nucleotides in response to infection; these serve as specific second messenger signals. The signals activate a diverse range of effectors, leading to bacterial cell death and thus abortive phage infection. A type I-B(UU) CBASS system. Functionally, cyclic dinucleotide synthase that catalyzes the synthesis of 3'3'-cyclic UMP-AMP (cUMP-AMP) from UTP and ATP, a second messenger for cell signal transduction. This chain is Cyclic UMP-AMP synthase, found in Rhodothermus marinus (strain SG0.5JP17-172).